Reading from the N-terminus, the 84-residue chain is Exodeoxyribonuclease 7 small subunit (84 aa).

The protein belongs to the XseB family. As to quaternary structure, heterooligomer composed of large and small subunits.

Its subcellular location is the cytoplasm. It carries out the reaction Exonucleolytic cleavage in either 5'- to 3'- or 3'- to 5'-direction to yield nucleoside 5'-phosphates.. Functionally, bidirectionally degrades single-stranded DNA into large acid-insoluble oligonucleotides, which are then degraded further into small acid-soluble oligonucleotides. This Bartonella henselae (strain ATCC 49882 / DSM 28221 / CCUG 30454 / Houston 1) (Rochalimaea henselae) protein is Exodeoxyribonuclease 7 small subunit.